The primary structure comprises 381 residues: Neuropeptide Y receptor type 2 (381 aa).

The tract at residues 1–35 is disordered; sequence MGPIGTEADENQTVEEMKVEQYGPQTTPRGELVPD. At 1 to 51 the chain is on the extracellular side; the sequence is MGPIGTEADENQTVEEMKVEQYGPQTTPRGELVPDPEPELIDSTKLIEVQV. N11 carries N-linked (GlcNAc...) asparagine glycosylation. A helical transmembrane segment spans residues 52 to 72; sequence VLILAYCSIILLGVIGNSLVI. Residues 73-86 are Cytoplasmic-facing; it reads HVVIKFKSMRTVTN. The chain crosses the membrane as a helical span at residues 87–107; it reads FFIANLAVADLVVNTLCLPFT. Over 108-124 the chain is Extracellular; that stretch reads LTYTLMGEWKMGPVLCH. A disulfide bond links C123 and C203. A helical membrane pass occupies residues 125–145; sequence LVPYAQGLAVQVSTITLTVIA. Residues 146 to 165 lie on the Cytoplasmic side of the membrane; sequence LDRHRCIVYHLESKISKRIS. A helical membrane pass occupies residues 166-186; it reads FLIIGLAWGISALLASPLAIF. The Extracellular segment spans residues 187-216; the sequence is REYSLIEIIPDFEIVACTEKWPGEEKSIYG. The helical transmembrane segment at 217–237 threads the bilayer; sequence TVYSLSSLLILYVLPLGIISF. Over 238–268 the chain is Cytoplasmic; that stretch reads SYTRIWSKLKSHVSPGAANDHYHQRRQKTTK. A helical membrane pass occupies residues 269–289; that stretch reads MLVCVVVVFAVSWLPLHAFQL. The Extracellular segment spans residues 290–304; the sequence is AVDIDSHVLDLKEYK. The chain crosses the membrane as a helical span at residues 305-325; that stretch reads LIFTVFHIIAMCSTFANPLLY. Residues 326–381 are Cytoplasmic-facing; that stretch reads GWMNSNYRKAFLSAFRCEQRLDAIHSEVSVTFKAKKNLEVRKNSGPNDSFTEATNV. C342 carries the S-palmitoyl cysteine lipid modification.

The protein belongs to the G-protein coupled receptor 1 family.

The protein resides in the cell membrane. Receptor for neuropeptide Y and peptide YY. This Macaca mulatta (Rhesus macaque) protein is Neuropeptide Y receptor type 2 (NPY2R).